Reading from the N-terminus, the 404-residue chain is Argininosuccinate synthase (404 aa).

ATP contacts are provided by residues Ala-12 to Ser-20 and Ala-39. Residues Tyr-91 and Ser-96 each coordinate L-citrulline. Residue Gly-121 participates in ATP binding. Positions 123, 127, and 128 each coordinate L-aspartate. Asn-127 provides a ligand contact to L-citrulline. Residues Arg-131, Ser-180, Ser-189, Glu-265, and Tyr-277 each contribute to the L-citrulline site.

The protein belongs to the argininosuccinate synthase family. Type 1 subfamily. In terms of assembly, homotetramer.

It is found in the cytoplasm. The catalysed reaction is L-citrulline + L-aspartate + ATP = 2-(N(omega)-L-arginino)succinate + AMP + diphosphate + H(+). It participates in amino-acid biosynthesis; L-arginine biosynthesis; L-arginine from L-ornithine and carbamoyl phosphate: step 2/3. In Vibrio campbellii (strain ATCC BAA-1116), this protein is Argininosuccinate synthase.